The sequence spans 670 residues: UvrABC system protein B (670 aa).

The Helicase ATP-binding domain maps to 26 to 183 (NGLKSGLAFQ…QRLVDLQYNR (158 aa)). 39 to 46 (GVTGSGKT) contacts ATP. A Beta-hairpin motif is present at residues 92–115 (YYDYYQPEAYVPSSDSFIEKDAAI). One can recognise a Helicase C-terminal domain in the interval 431-597 (QVDDLLSEIN…GLSKQVNDVM (167 aa)). Residues 630-665 (LKQIALSEKQMFACAKNLEFEKAALFRDEVTKLHEQ) form the UVR domain.

Belongs to the UvrB family. In terms of assembly, forms a heterotetramer with UvrA during the search for lesions. Interacts with UvrC in an incision complex.

It localises to the cytoplasm. Its function is as follows. The UvrABC repair system catalyzes the recognition and processing of DNA lesions. A damage recognition complex composed of 2 UvrA and 2 UvrB subunits scans DNA for abnormalities. Upon binding of the UvrA(2)B(2) complex to a putative damaged site, the DNA wraps around one UvrB monomer. DNA wrap is dependent on ATP binding by UvrB and probably causes local melting of the DNA helix, facilitating insertion of UvrB beta-hairpin between the DNA strands. Then UvrB probes one DNA strand for the presence of a lesion. If a lesion is found the UvrA subunits dissociate and the UvrB-DNA preincision complex is formed. This complex is subsequently bound by UvrC and the second UvrB is released. If no lesion is found, the DNA wraps around the other UvrB subunit that will check the other stand for damage. The polypeptide is UvrABC system protein B (Psychromonas ingrahamii (strain DSM 17664 / CCUG 51855 / 37)).